The following is a 375-amino-acid chain: uncharacterized protein (375 aa).

The signal sequence occupies residues 1–20 (MKNKLFIILIIFIILKIVIC). Residues 21-335 (QNTTPSKLIP…EKQVERKITP (315 aa)) are Extracellular-facing. The segment covering 30 to 42 (PQQQQKQKQQQTQ) has biased composition (low complexity). Disordered regions lie at residues 30–74 (PQQQ…QPQQ) and 113–253 (SQNV…PHNH). Positions 43–53 (PHHHHHHHQQH) are enriched in basic residues. Positions 54–74 (QQHQQQHQPNQQIKQQQQPQQ) are enriched in low complexity. Residues 120 to 151 (PPHHTQQRVPHHHGPNGAPHHHGPNGAPHHHG) are compositionally biased toward basic residues. Residues 168–180 (GHNTQGHVQTNHV) show a composition bias toward polar residues. Residues 181-220 (NNINKNNINNNNNNNNNNNNNNNNNNNNNINDNKNIRNNI) show a composition bias toward low complexity. The helical transmembrane segment at 336-356 (IMVLYILLASTMVIQLFIMVF) threads the bilayer. Over 357–375 (KQVKHIREINAKTTMESLL) the chain is Cytoplasmic.

The protein resides in the membrane. This is an uncharacterized protein from Dictyostelium discoideum (Social amoeba).